We begin with the raw amino-acid sequence, 375 residues long: 23S rRNA (uracil(747)-C(5))-methyltransferase RlmC (375 aa).

Positions 3, 11, 14, and 87 each coordinate [4Fe-4S] cluster. 4 residues coordinate S-adenosyl-L-methionine: glutamine 212, phenylalanine 241, glutamate 262, and asparagine 307. Cysteine 334 acts as the Nucleophile in catalysis.

The protein belongs to the class I-like SAM-binding methyltransferase superfamily. RNA M5U methyltransferase family. RlmC subfamily.

The catalysed reaction is uridine(747) in 23S rRNA + S-adenosyl-L-methionine = 5-methyluridine(747) in 23S rRNA + S-adenosyl-L-homocysteine + H(+). In terms of biological role, catalyzes the formation of 5-methyl-uridine at position 747 (m5U747) in 23S rRNA. The sequence is that of 23S rRNA (uracil(747)-C(5))-methyltransferase RlmC from Escherichia coli O7:K1 (strain IAI39 / ExPEC).